The primary structure comprises 324 residues: Methionyl-tRNA formyltransferase (324 aa).

A (6S)-5,6,7,8-tetrahydrofolate-binding site is contributed by 113–116 (SLLP).

Belongs to the Fmt family.

It catalyses the reaction L-methionyl-tRNA(fMet) + (6R)-10-formyltetrahydrofolate = N-formyl-L-methionyl-tRNA(fMet) + (6S)-5,6,7,8-tetrahydrofolate + H(+). In terms of biological role, attaches a formyl group to the free amino group of methionyl-tRNA(fMet). The formyl group appears to play a dual role in the initiator identity of N-formylmethionyl-tRNA by promoting its recognition by IF2 and preventing the misappropriation of this tRNA by the elongation apparatus. In Bacteroides fragilis (strain ATCC 25285 / DSM 2151 / CCUG 4856 / JCM 11019 / LMG 10263 / NCTC 9343 / Onslow / VPI 2553 / EN-2), this protein is Methionyl-tRNA formyltransferase.